Reading from the N-terminus, the 273-residue chain is Shikimate dehydrogenase (NADP(+)) (273 aa).

Residues 18–20 and T65 contribute to the shikimate site; that span reads SKS. K69 functions as the Proton acceptor in the catalytic mechanism. NADP(+) is bound at residue E81. 2 residues coordinate shikimate: N90 and D105. NADP(+) contacts are provided by residues 130-134, 154-159, and M217; these read GAGGA and NRTHSK. Position 219 (Y219) interacts with shikimate. G240 serves as a coordination point for NADP(+).

The protein belongs to the shikimate dehydrogenase family. In terms of assembly, homodimer.

It catalyses the reaction shikimate + NADP(+) = 3-dehydroshikimate + NADPH + H(+). It functions in the pathway metabolic intermediate biosynthesis; chorismate biosynthesis; chorismate from D-erythrose 4-phosphate and phosphoenolpyruvate: step 4/7. Involved in the biosynthesis of the chorismate, which leads to the biosynthesis of aromatic amino acids. Catalyzes the reversible NADPH linked reduction of 3-dehydroshikimate (DHSA) to yield shikimate (SA). The polypeptide is Shikimate dehydrogenase (NADP(+)) (Herminiimonas arsenicoxydans).